The primary structure comprises 220 residues: Deoxyribose-phosphate aldolase 1 (220 aa).

The active-site Proton donor/acceptor is Asp-89. The active-site Schiff-base intermediate with acetaldehyde is the Lys-151. Catalysis depends on Lys-180, which acts as the Proton donor/acceptor.

It belongs to the DeoC/FbaB aldolase family. DeoC type 1 subfamily.

The protein localises to the cytoplasm. It carries out the reaction 2-deoxy-D-ribose 5-phosphate = D-glyceraldehyde 3-phosphate + acetaldehyde. Its pathway is carbohydrate degradation; 2-deoxy-D-ribose 1-phosphate degradation; D-glyceraldehyde 3-phosphate and acetaldehyde from 2-deoxy-alpha-D-ribose 1-phosphate: step 2/2. In terms of biological role, catalyzes a reversible aldol reaction between acetaldehyde and D-glyceraldehyde 3-phosphate to generate 2-deoxy-D-ribose 5-phosphate. This chain is Deoxyribose-phosphate aldolase 1, found in Staphylococcus aureus (strain COL).